Consider the following 858-residue polypeptide: MVNFTVDQIRAIMDKEANIRNMSVIAHVDHGKSTLTDSLVCKAGIIASARAGETRFTDTRKDEQERCITIKSTAISLFYELSENDLNFIKQSKDGSGFLINLIDSPGHVDFSSEVTAALRVTDGALVVVDCVSGVCVQTETVLRQAIAERIKPVLMMNKMDRALLELQLEPEELYQTFQRIVENVNVIISTYGEGESGPMGNIMIDPVLGTVGFGSGLHGWAFTLKQFAEMYVAKFAAKGEGQLGPAERAKKVEDMMKKLWGDRYFDPANGKFSKSANSPDGKKLPRTFCQLILDPIFKVFDPIMNFRKEETAKLIEKLDIKLDSEDKDKEGKPLLKAVMRRWLPAGDALLQMITIHLPSPVTAQKYRCELLYEGPPDDEAAMGIKSCDPKGPLMMYISKMVPTSDKGRFYAFGRVFSGVVSTGLKVRIMGPNYTPGKKEDLYLKPIQRTILMMGRYVEPIEDVPCGNIVGLVGVDQFLVKTGTITTFEHAHNMRVMKFSVSPVVRVAVEAKNPADLPKLVEGLKRLAKSDPMVQCIIEESGEHIIAGAGELHLEICLKDLEEDHACIPIKKSDPVVSYRETVSEESNVLCLSKSPNKHNRLYMKARPFPDGLAEDIDKGEVSARQELKARARYLAEKYEWDVAEARKIWCFGPDGTGPNILTDITKGVQYLNEIKDSVVAGFQWATKEGALCEENMRGVRFDVHDVTLHADAIHRGGGQIIPTARRCLYASVLTAQPRLMEPIYLVEIQCPEQVVGGIYGVLNRKRGHVFEESQVAGTPMFVVKAYLPVNESFGFTADLRSNTGGQAFPQCVFDHWQILPGDPFDNSSRGSQVVAETRKRKGLKEGIPALDNFLDKL.

The tr-type G domain maps to 17 to 362 (ANIRNMSVIA…MITIHLPSPV (346 aa)). 26–33 (AHVDHGKS) provides a ligand contact to GTP. Thr-54 is subject to Phosphothreonine. A Phosphothreonine; by EEF2K modification is found at Thr-57. Position 59 is a phosphothreonine (Thr-59). Lys-152 carries the post-translational modification N6-succinyllysine. GTP contacts are provided by residues 158 to 161 (NKMD) and 216 to 218 (SGL). Lys-235 carries the post-translational modification N6-acetyllysine. An N6-acetyllysine; alternate modification is found at Lys-239. Lys-239 is covalently cross-linked (Glycyl lysine isopeptide (Lys-Gly) (interchain with G-Cter in SUMO1); alternate). A Phosphotyrosine; by CSK modification is found at Tyr-265. Lys-272 carries the N6-acetyllysine; alternate modification. An N6-succinyllysine; alternate modification is found at Lys-272. Lys-275 bears the N6-acetyllysine mark. Lys-322 participates in a covalent cross-link: Glycyl lysine isopeptide (Lys-Gly) (interchain with G-Cter in SUMO). Residue Ser-325 is modified to Phosphoserine. The residue at position 373 (Tyr-373) is a Phosphotyrosine; by CSK. Thr-435 carries the phosphothreonine modification. An N6-acetyllysine mark is found at Lys-439 and Lys-445. Ser-502 is subject to Phosphoserine. Lys-525 is subject to N6,N6,N6-trimethyllysine; by EEF2KMT. Lys-529 is covalently cross-linked (Glycyl lysine isopeptide (Lys-Gly) (interchain with G-Cter in SUMO)). At Lys-572 the chain carries N6-succinyllysine. A Phosphoserine; by CDK2 modification is found at Ser-595. Residue Lys-619 is modified to N6-acetyllysine. His-715 is modified ((Microbial infection) ADP-ribosyldiphthamide). Diphthamide is present on His-715.

The protein belongs to the TRAFAC class translation factor GTPase superfamily. Classic translation factor GTPase family. EF-G/EF-2 subfamily. Binds to 80S ribosomes. Actively translating ribosomes show mutually exclusive binding of eIF5a (EIF5A or EIF5A2) and EEF2/eEF2. Interacts with SERBP1; interaction sequesters EEF2/eEF2 at the A-site of the ribosome, thereby blocking the interaction sites of the mRNA-tRNA complex, promoting ribosome stabilization and hibernation. Interacts with HABP4; interaction takes place at the A-site of hibernating ribosomes and promotes ribosome stabilization. Component of the mRNA surveillance SURF complex, at least composed of ERF1, ERF3 (ERF3A or ERF3B), EEF2, UPF1/RENT1, SMG1, SMG8 and SMG9. Interacts with RBPMS2. Post-translationally, phosphorylation by EF-2 kinase completely inactivates EF-2; it requires prior phosphorylation by CDK2 at Ser-595 during mitotic prometaphase. Phosphorylation by CSK promotes SUMOylation, proteolytic cleavage, and nuclear translocation if the C-terminal fragment. Diphthamide is 2-[3-carboxyamido-3-(trimethyl-ammonio)propyl]histidine. In terms of processing, (Microbial infection) Diphthamide can be ADP-ribosylated by diphtheria toxin and by Pseudomonas exotoxin A, thus arresting protein synthesis. Post-translationally, ISGylated. Proteolytically processed at two sites following phosphorylation by CSK. In terms of processing, SUMOylated following phosphorylation by CSK, promotes proteolytic cleavage.

The protein localises to the cytoplasm. It is found in the nucleus. The catalysed reaction is GTP + H2O = GDP + phosphate + H(+). Catalyzes the GTP-dependent ribosomal translocation step during translation elongation. During this step, the ribosome changes from the pre-translocational (PRE) to the post-translocational (POST) state as the newly formed A-site-bound peptidyl-tRNA and P-site-bound deacylated tRNA move to the P and E sites, respectively. Catalyzes the coordinated movement of the two tRNA molecules, the mRNA and conformational changes in the ribosome. The protein is Elongation factor 2 (EEF2) of Cricetulus griseus (Chinese hamster).